The primary structure comprises 294 residues: ATP synthase gamma chain (294 aa).

Belongs to the ATPase gamma chain family. As to quaternary structure, F-type ATPases have 2 components, CF(1) - the catalytic core - and CF(0) - the membrane proton channel. CF(1) has five subunits: alpha(3), beta(3), gamma(1), delta(1), epsilon(1). CF(0) has three main subunits: a, b and c.

The protein localises to the cell inner membrane. In terms of biological role, produces ATP from ADP in the presence of a proton gradient across the membrane. The gamma chain is believed to be important in regulating ATPase activity and the flow of protons through the CF(0) complex. The protein is ATP synthase gamma chain of Rhizorhabdus wittichii (strain DSM 6014 / CCUG 31198 / JCM 15750 / NBRC 105917 / EY 4224 / RW1) (Sphingomonas wittichii).